The following is a 98-amino-acid chain: Dehydrogenase acuH (98 aa).

Its pathway is secondary metabolite biosynthesis. In terms of biological role, dehydrogenase; part of the gene cluster that mediates the biosynthesis of aculins. The pathway begins with the synthesis of 6-methylsalicylic acid by the polyketide synthase (PKS) acuA via condensation of acetate and malonate units. The 6-methylsalicylic acid decarboxylase acuB then catalyzes the decarboxylation of 6-methylsalicylic acid to yield m-cresol (also known as 3-methylphenol). These first reactions occur in the cytosol. The intermediate m-cresol is then transported into the endoplasmic reticulum where the cytochrome P450 monooxygenase acuC converts it to m-hydroxybenzyl alcohol, which is further converted to gentisyl alcohol by the cytochrome P450 monooxygenase acuD. Gentisyl alcohol is further oxidized by the oxidoreductase acuE that probably catalyzes hydroxylation of the aromatic ring. The aromatic system might then be opened by oxidation through a Baeyer-Villiger type of oxidation, which could be catalyzed by acuF, with the carboxylic acid at C-1 subsequently reduced to an aldehyde by acuG. Subsequently, a hemiacetal is formed, before the dehydrogenase acuH would reduce the double bond between C-4 and C-6. Finally, keto-enol tautomerism results in formation of aculinic acid, which exists as two diastereomers (both R/S configurations at C-1) by non-enzymatic hemiacetal formation. The carboxypeptidase acuI could be involved in the linking of aculinic acid to an aculene A moiety produced by the aculene biosynthesis cluster and which leads to the production of aculin A. AcuI may also be involved in the attachment of proline to aculinic acid to form epi-aculins A and B. In Aspergillus aculeatus (strain ATCC 16872 / CBS 172.66 / WB 5094), this protein is Dehydrogenase acuH.